The following is a 169-amino-acid chain: Disulfide bond formation protein B (169 aa).

Over 1–14 (MNNLTLSLHRERRL) the chain is Cytoplasmic. Residues 15–31 (LVLLGLVCLALLAGALY) traverse the membrane as a helical segment. Residues 32–49 (LQYVKNEDPCPLCIIQRY) lie on the Periplasmic side of the membrane. C41 and C44 are disulfide-bonded. A helical transmembrane segment spans residues 50 to 64 (FFVLIAVFAFIGAGM). Over 65 to 71 (ASGAGIA) the chain is Cytoplasmic. The helical transmembrane segment at 72–89 (VIEALIVLSAAAGVGTAA) threads the bilayer. The Periplasmic segment spans residues 90-144 (RHLYVQLNPGFSCGFDALQPVVDSLPPAHWLPGVFKVAGLCETVYPPIFGILLPG). A disulfide bridge links C102 with C130. Residues 145–163 (WALIAFALIVVPVAASLLR) traverse the membrane as a helical segment. Residues 164–169 (HRGRLR) are Cytoplasmic-facing.

It belongs to the DsbB family.

The protein localises to the cell inner membrane. Functionally, required for disulfide bond formation in some periplasmic proteins. Acts by oxidizing the DsbA protein. The protein is Disulfide bond formation protein B of Burkholderia thailandensis (strain ATCC 700388 / DSM 13276 / CCUG 48851 / CIP 106301 / E264).